The chain runs to 135 residues: Small ribosomal subunit protein eS6 (135 aa).

Belongs to the eukaryotic ribosomal protein eS6 family.

This chain is Small ribosomal subunit protein eS6, found in Methanococcoides burtonii (strain DSM 6242 / NBRC 107633 / OCM 468 / ACE-M).